The chain runs to 1149 residues: Golgi apparatus protein 1 homolog (1149 aa).

The signal sequence occupies residues Met1–Gln19. The Extracellular segment spans residues Gln20 to Asn1115. 16 Cys-rich GLG1 repeats span residues Asn24–Thr69, Thr71–Thr135, Lys139–Ala207, Ile216–Phe276, Met277–Glu344, Gln349–Asn411, Lys415–Ser475, Asp477–Gln549, Pro551–Asn610, Arg613–Glu676, Met677–Lys736, Asp743–Leu803, His809–Leu867, Leu868–Ile938, Asp945–Leu1009, and Ile1010–Glu1070. N-linked (GlcNAc...) asparagine glycosylation occurs at Asn133. Asn411 carries an N-linked (GlcNAc...) asparagine glycan. A helical transmembrane segment spans residues Ser1116–Gly1136. The Cytoplasmic portion of the chain corresponds to Arg1137 to Arg1149.

It localises to the membrane. The sequence is that of Golgi apparatus protein 1 homolog from Caenorhabditis elegans.